The sequence spans 59 residues: UPF0434 protein Mmc1_0910 (59 aa).

This sequence belongs to the UPF0434 family.

This Magnetococcus marinus (strain ATCC BAA-1437 / JCM 17883 / MC-1) protein is UPF0434 protein Mmc1_0910.